Here is a 596-residue protein sequence, read N- to C-terminus: Nodulation outer protein X (596 aa).

It localises to the secreted. The sequence is that of Nodulation outer protein X (nopX) from Sinorhizobium fredii (strain NBRC 101917 / NGR234).